A 305-amino-acid polypeptide reads, in one-letter code: uncharacterized protein (305 aa).

The tract at residues 53–185 is disordered; that stretch reads SGRIGDGDDG…TGPRSSRTVG (133 aa). Composition is skewed to basic and acidic residues over residues 95–116 and 128–142; these read VEER…ERPT and GSER…RSEG. Over residues 161–171 the composition is skewed to polar residues; sequence GNTQAPSQSAE. Residues 260–302 form an RING-type; atypical zinc finger; the sequence is CAICMSNFIKNQRLRVLPCDHRFHVGCVDKWLLGHSNKCPVCR.

This is an uncharacterized protein from Encephalitozoon cuniculi (strain GB-M1) (Microsporidian parasite).